The chain runs to 344 residues: L-rhamnose-proton symporter (344 aa).

The next 10 helical transmembrane spans lie at A4–A24, W38–L58, F68–I88, M101–I121, T131–V151, L175–A195, L214–I234, I259–G279, M290–L310, and V321–G341.

It belongs to the L-rhamnose transporter (TC 2.A.7.6) family.

The protein resides in the cell inner membrane. It carries out the reaction L-rhamnopyranose(in) + H(+)(in) = L-rhamnopyranose(out) + H(+)(out). Uptake of L-rhamnose across the cytoplasmic membrane with the concomitant transport of protons into the cell (symport system). The chain is L-rhamnose-proton symporter from Salmonella typhi.